Consider the following 811-residue polypeptide: MERYKGLERLLSELEEFLFILDKENLSSAAVLKKSIVSEILQLFIKSNSSCDEEYIYMNKVLETDKKEAQGKQGKAQVLDPPAKETLTNGTAGQHLAPPQKSLPDLPPPKIITEKLPVSKCDSPEGYYEEAEPYNASFNDDGEAVSSSYESYDEDESNKSKSAMQQHQWPSTEASIELMKDAMICAFLWRKKWLGQWAKQLCVVKDTRLMCYKTSKDHNPQLDVNLIGCSVSYKEKQVRRKEHKLKITPTNTDVIVLGMQSKEQAEQWLKVIQDISGLQSDPLCDSSVITADGQRQIHPKAEGTDRHSGASESGSSTDGHPETPEIKEVKKKVTSGLKLSNLMNLGRKKSTSMESPDKALETSNYLNVLINSQWKSRYCCIKDGQLHFYQDRNKTKNAAQPVSLIGCDIIPQPTQDHLYSFRILQNGEELATLEAKSSEDMGHWLGLLLLESGSRSDPEDFTYDYVDADRVSCIVSAAKNSYFLMQRKYCEPNTYIDAPRGQRYQQDDLYDDVDMSDIQGDEPKSEEKGEAEDKMYLDLIPTRSFLHSVGIKSLCQALGSPGPERVSGKKDNEESERGTLSCREQDSSGQVTEETKQVTEDPPQQTSPGTPIIGPSVSASPRLEKSNKERVKATNHVAIETLLGKNRTEAEIKRFTEEKEKLEKEREEIRVQLAQLRKERREMKETVTNCPDKGLLTDLEDKLRLKEEQCKERESYRVDLELKLVEVKENLRKAELGPATLGTSVEPAHLDTTAPSIKSCSPTHAPECSPVTATVGSPVNSAVALKSRPQPIVTTGKVLQKAKEWEKKGAS.

Disordered stretches follow at residues 67–110 and 132–168; these read KEAQ…PPPK and EPYN…QQHQ. A PH 1 domain is found at 181-277; sequence DAMICAFLWR…WLKVIQDISG (97 aa). Residues 294-326 form a disordered region; the sequence is QRQIHPKAEGTDRHSGASESGSSTDGHPETPEI. Residues 299–309 are compositionally biased toward basic and acidic residues; that stretch reads PKAEGTDRHSG. The 95-residue stretch at 359 to 453 folds into the PH 2 domain; it reads ALETSNYLNV…WLGLLLLESG (95 aa). 2 disordered regions span residues 500-532 and 558-631; these read RGQR…GEAE and LGSP…KERV. 3 stretches are compositionally biased toward basic and acidic residues: residues 521-532, 566-577, and 622-631; these read DEPKSEEKGEAE, VSGKKDNEESER, and RLEKSNKERV. Positions 642-737 form a coiled coil; that stretch reads LLGKNRTEAE…KENLRKAELG (96 aa).

As to quaternary structure, interacts with src.

It localises to the cytoplasm. Its function is as follows. May play a role in a signaling cascade by enhancing the kinase activity of src. Contributes to src-regulated transcription activation. This is Actin filament-associated protein 1-like 2 (afap1l2) from Xenopus laevis (African clawed frog).